The primary structure comprises 1037 residues: PH and SEC7 domain-containing protein 3 (1037 aa).

The segment at 37–70 (EEKTPDSSDHGGSTLLPPTVTNEFPEYGTMEEGG) is disordered. A Phosphoserine modification is found at Ser-76. 5 disordered regions span residues 169-189 (TASH…GKSP), 236-255 (RVPE…HNPV), 262-284 (REQR…SMGR), 304-335 (EAES…ACGV), and 353-375 (APSE…ESGE). The span at 237 to 251 (VPESACPVSSSSAGS) shows a compositional bias: low complexity. Over residues 262 to 277 (REQRSDLGREHPRGYD) the composition is skewed to basic and acidic residues. The SEC7 domain occupies 515–723 (NSVYTRGPQE…KALYNSIKNE (209 aa)). Positions 730–747 (DDEEKKKSPSEGTDEKAN) are enriched in basic and acidic residues. Residues 730 to 762 (DDEEKKKSPSEGTDEKANGTHPKTISRIGSTTN) form a disordered region. Over residues 750–762 (HPKTISRIGSTTN) the composition is skewed to polar residues. Ser-759 bears the Phosphoserine mark. Residues 774–887 (AVYKSGFLAR…WINKINCVAA (114 aa)) form the PH domain. A coiled-coil region spans residues 911–941 (ATTTKLSQEEQLKSHESKLKQITTELAEHRS). The disordered stretch occupies residues 984-1037 (LLTTDGNEPVGLKKSHSSPSLNPDASPVTAKVKRNVSERKDHRPETPGIKQKVT). A phosphoserine mark is found at Ser-998, Ser-1000, Ser-1001, Ser-1003, and Ser-1009. Basic and acidic residues predominate over residues 1018-1028 (NVSERKDHRPE).

As to expression, ubiquitously expressed, with highest levels in liver. Present in brain, with highest levels in olfactory bulb, cortex, hippocampal pyramidal cell layer and cerebellar granule cell layer (at protein level).

The protein resides in the cell membrane. It is found in the cell projection. Its subcellular location is the ruffle membrane. It localises to the postsynaptic density. In terms of biological role, guanine nucleotide exchange factor for ARF6. The sequence is that of PH and SEC7 domain-containing protein 3 (Psd3) from Mus musculus (Mouse).